Reading from the N-terminus, the 736-residue chain is DEAD-box ATP-dependent RNA helicase 21 (736 aa).

Positions 14–38 (LTREEREKLALERRQAAVTDQRRSA) form a coiled coil. The segment covering 25–38 (ERRQAAVTDQRRSA) has biased composition (basic and acidic residues). 2 disordered regions span residues 25–178 (ERRQ…PKKR) and 231–263 (KVAA…DKKE). Residues 46 to 58 (PRPPPPPPPPLSN) show a composition bias toward pro residues. Composition is skewed to basic and acidic residues over residues 64–166 (SSSH…DAIK) and 231–252 (KVAA…GLDD). Positions 137–167 (DRDRERGDREKDRLEKMAEREREKELDAIKE) form a coiled coil. The Q motif motif lies at 315–343 (RKWSESKLGTELLRAVEKAGYKEPSPIQM). The Helicase ATP-binding domain occupies 346–541 (IPLGLQQRDV…RKYLRNPVVV (196 aa)). Residue 359 to 366 (AETGSGKT) participates in ATP binding. The short motif at 472-475 (DEAD) is the DEAD box element. Residues 568-712 (RLQKILTDLG…PVPPELARHE (145 aa)) form the Helicase C-terminal domain. The interval 704-736 (VPPELARHEASKFKPGSVPDRPPRRNDTVYATH) is disordered.

It belongs to the DEAD box helicase family. DDX23/PRP28 subfamily.

It localises to the cytoplasm. The protein resides in the nucleus. The catalysed reaction is ATP + H2O = ADP + phosphate + H(+). Functionally, ATP-dependent RNA helicase involved in mRNA splicing. May destabilize the U1/5'-splice site duplex to permit an effective competition for the 5'-splice site by the U6 snRNA, resulting in the switch between U1 and U6 at the 5'-splice site. May also act to unwind the U4/U6 base-pairing interaction in the U4/U6/U5 snRNP, facilitating the first covalent step of splicing. The chain is DEAD-box ATP-dependent RNA helicase 21 from Oryza sativa subsp. japonica (Rice).